Here is a 245-residue protein sequence, read N- to C-terminus: Eukaryotic translation initiation factor 6 (245 aa).

This sequence belongs to the eIF-6 family. Monomer. Associates with the 60S ribosomal subunit.

The protein localises to the cytoplasm. Its subcellular location is the nucleus. It is found in the nucleolus. Functionally, binds to the 60S ribosomal subunit and prevents its association with the 40S ribosomal subunit to form the 80S initiation complex in the cytoplasm. May also be involved in ribosome biogenesis. In Xenopus laevis (African clawed frog), this protein is Eukaryotic translation initiation factor 6 (eif6).